Reading from the N-terminus, the 29-residue chain is Cyclotide mden-F (29 aa).

A cross-link (cyclopeptide (Gly-Asn)) is located at residues Gly1 to Asn29. 3 cysteine pairs are disulfide-bonded: Cys5/Cys19, Cys9/Cys21, and Cys14/Cys26.

The protein belongs to the cyclotide family. This is a cyclic peptide.

Probably participates in a plant defense mechanism. This chain is Cyclotide mden-F, found in Melicytus dentatus (Tree violet).